The following is a 539-amino-acid chain: Membrane protein insertase YidC (539 aa).

Residues 7–27 (IIAIALSFVVLVGWSYLADHM) form a helical membrane-spanning segment. Residues 32 to 64 (QPAPQAQQEETAPSASQAAPQSASQAAAPAPRA) are disordered. 3 consecutive transmembrane segments (helical) span residues 347-367 (YVGN…LVFW), 418-438 (GGCL…QALL), and 498-518 (IMMF…SGLV).

The protein belongs to the OXA1/ALB3/YidC family. Type 1 subfamily. Interacts with the Sec translocase complex via SecD. Specifically interacts with transmembrane segments of nascent integral membrane proteins during membrane integration.

It is found in the cell inner membrane. Required for the insertion and/or proper folding and/or complex formation of integral membrane proteins into the membrane. Involved in integration of membrane proteins that insert both dependently and independently of the Sec translocase complex, as well as at least some lipoproteins. Aids folding of multispanning membrane proteins. This is Membrane protein insertase YidC from Nitratidesulfovibrio vulgaris (strain DSM 19637 / Miyazaki F) (Desulfovibrio vulgaris).